We begin with the raw amino-acid sequence, 59 residues long: MLNIFSLICLSSALHSSSFFFAKLPEAYALFNPIVDVMPVIPVLFFLLALVWQAAVSFR.

Positions 1–22 (MLNIFSLICLSSALHSSSFFFA) are excised as a propeptide. The chain crosses the membrane as a helical span at residues 38–58 (MPVIPVLFFLLALVWQAAVSF).

It belongs to the PsbK family. In terms of assembly, PSII is composed of 1 copy each of membrane proteins PsbA, PsbB, PsbC, PsbD, PsbE, PsbF, PsbH, PsbI, PsbJ, PsbK, PsbL, PsbM, PsbT, PsbX, PsbY, PsbZ, Psb30/Ycf12, at least 3 peripheral proteins of the oxygen-evolving complex and a large number of cofactors. It forms dimeric complexes.

The protein localises to the plastid. The protein resides in the chloroplast thylakoid membrane. Its function is as follows. One of the components of the core complex of photosystem II (PSII). PSII is a light-driven water:plastoquinone oxidoreductase that uses light energy to abstract electrons from H(2)O, generating O(2) and a proton gradient subsequently used for ATP formation. It consists of a core antenna complex that captures photons, and an electron transfer chain that converts photonic excitation into a charge separation. The sequence is that of Photosystem II reaction center protein K from Piper cenocladum (Ant piper).